The sequence spans 81 residues: Sulfur carrier protein TusA (81 aa).

Residue Cys19 is the Cysteine persulfide intermediate of the active site.

It belongs to the sulfur carrier protein TusA family. In terms of assembly, interacts with IscS.

Its subcellular location is the cytoplasm. It participates in tRNA modification. Sulfur carrier protein involved in sulfur trafficking in the cell. Part of a sulfur-relay system required for 2-thiolation during synthesis of 2-thiouridine of the modified wobble base 5-methylaminomethyl-2-thiouridine (mnm(5)s(2)U) in tRNA. Interacts with IscS and stimulates its cysteine desulfurase activity. Accepts an activated sulfur from IscS, which is then transferred to TusD, and thus determines the direction of sulfur flow from IscS to 2-thiouridine formation. Also appears to be involved in sulfur transfer for the biosynthesis of molybdopterin. This Escherichia coli (strain SMS-3-5 / SECEC) protein is Sulfur carrier protein TusA.